Here is a 1222-residue protein sequence, read N- to C-terminus: ATP-dependent helicase/nuclease subunit A (1222 aa).

Residues Gln-39–Gln-495 enclose the UvrD-like helicase ATP-binding domain. Residue Ala-60–Thr-67 coordinates ATP. One can recognise a UvrD-like helicase C-terminal domain in the interval Gln-524–Gly-810.

It belongs to the helicase family. AddA subfamily. In terms of assembly, heterodimer of AddA and AddB/RexB. The cofactor is Mg(2+).

The enzyme catalyses Couples ATP hydrolysis with the unwinding of duplex DNA by translocating in the 3'-5' direction.. It carries out the reaction ATP + H2O = ADP + phosphate + H(+). Its function is as follows. The heterodimer acts as both an ATP-dependent DNA helicase and an ATP-dependent, dual-direction single-stranded exonuclease. Recognizes the chi site generating a DNA molecule suitable for the initiation of homologous recombination. The AddA nuclease domain is required for chi fragment generation; this subunit has the helicase and 3' -&gt; 5' nuclease activities. This Streptococcus pyogenes serotype M49 (strain NZ131) protein is ATP-dependent helicase/nuclease subunit A.